The primary structure comprises 266 residues: MPPRAKKSLGQNFLKDRNIAARIAAQLHIGPDDWVIEIGPGPGALTRHIHAAGPARLFLLEKDHHWAREHHLHPLAGTPEAQVVLTDALLFPWERLDAAHPWKVIGNLPYNVASPLMWDICSRAPGLVRASFMIQKEVGERIVAAPGSRQYGALSVWLQCFTKPEWCFVVPPHVFTPRPKVDSAVLAFTPRTDRPDAVQSKRLAHVLRLCFQQRRKQLQGILRPHVGGDASALLAELGIDPAARPETLSPERFIALGEAVAMSAIA.

Positions 12, 14, 39, 61, 87, and 107 each coordinate S-adenosyl-L-methionine.

It belongs to the class I-like SAM-binding methyltransferase superfamily. rRNA adenine N(6)-methyltransferase family. RsmA subfamily.

The protein localises to the cytoplasm. It carries out the reaction adenosine(1518)/adenosine(1519) in 16S rRNA + 4 S-adenosyl-L-methionine = N(6)-dimethyladenosine(1518)/N(6)-dimethyladenosine(1519) in 16S rRNA + 4 S-adenosyl-L-homocysteine + 4 H(+). In terms of biological role, specifically dimethylates two adjacent adenosines (A1518 and A1519) in the loop of a conserved hairpin near the 3'-end of 16S rRNA in the 30S particle. May play a critical role in biogenesis of 30S subunits. The protein is Ribosomal RNA small subunit methyltransferase A of Nitratidesulfovibrio vulgaris (strain DP4) (Desulfovibrio vulgaris).